A 488-amino-acid polypeptide reads, in one-letter code: Putative BTB/POZ domain-containing protein L674 (488 aa).

In terms of domain architecture, BTB spans N83–N150.

This sequence belongs to the mimivirus BTB/WD family.

The chain is Putative BTB/POZ domain-containing protein L674 from Acanthamoeba polyphaga (Amoeba).